A 377-amino-acid polypeptide reads, in one-letter code: 26S proteasome non-ATPase regulatory subunit 4 (377 aa).

Residues 5–188 form the VWFA domain; that stretch reads STMVCVDNSE…LADALISSPI (184 aa). Lysine 122 participates in a covalent cross-link: Glycyl lysine isopeptide (Lys-Gly) (interchain with G-Cter in SUMO2). The interval 197–262 is interaction with UBQLN1; that stretch reads LGLGASDFEF…TEDSDDALLK (66 aa). The region spanning 211–230 is the UIM 1 domain; the sequence is SADPELALALRVSMEEQRQR. An essential for ubiquitin-binding region spans residues 216-220; that stretch reads LALAL. Over residues 224–237 the composition is skewed to basic and acidic residues; that stretch reads MEEQRQRQEEEARR. Residues 224 to 255 form a disordered region; that stretch reads MEEQRQRQEEEARRAAAASAAEAGIATTGTED. A phosphothreonine mark is found at threonine 250 and threonine 253. Serine 256 and serine 266 each carry phosphoserine. In terms of domain architecture, UIM 2 spans 282–301; sequence TEEEQIAYAMQMSLQGAEFG. The tract at residues 287–291 is essential for ubiquitin-binding; it reads IAYAM. 2 disordered regions span residues 300 to 327 and 341 to 377; these read FGQAESADIDASSAMDTSEPAKEEDDYD and NLPGVDPNNEAIRNAMGSLASQATKDGKKDKKEEDKK. A phosphoserine mark is found at serine 358 and serine 361. The segment covering 365 to 377 has biased composition (basic and acidic residues); sequence KDGKKDKKEEDKK.

This sequence belongs to the proteasome subunit S5A family. Component of the 19S proteasome regulatory particle complex. The 26S proteasome consists of a 20S core particle (CP) and two 19S regulatory subunits (RP). The regulatory particle is made of a lid composed of 9 subunits, a base containing 6 ATPases and few additional components including PSMD4. Interacts with NUB1. Interacts with SQSTM1. Interacts with UBQLN4. Interacts with UBE3A. Interacts with UBQLN1 (via ubiquitin-like domain). Interacts with DDI2.

In terms of biological role, component of the 26S proteasome, a multiprotein complex involved in the ATP-dependent degradation of ubiquitinated proteins. This complex plays a key role in the maintenance of protein homeostasis by removing misfolded or damaged proteins, which could impair cellular functions, and by removing proteins whose functions are no longer required. Therefore, the proteasome participates in numerous cellular processes, including cell cycle progression, apoptosis, or DNA damage repair. PSMD4 acts as an ubiquitin receptor subunit through ubiquitin-interacting motifs and selects ubiquitin-conjugates for destruction. Displays a preferred selectivity for longer polyubiquitin chains. The chain is 26S proteasome non-ATPase regulatory subunit 4 (PSMD4) from Homo sapiens (Human).